A 250-amino-acid chain; its full sequence is 5'-nucleotidase SurE (250 aa).

Residues aspartate 8, aspartate 9, serine 39, and asparagine 91 each contribute to the a divalent metal cation site.

It belongs to the SurE nucleotidase family. Requires a divalent metal cation as cofactor.

It is found in the cytoplasm. It carries out the reaction a ribonucleoside 5'-phosphate + H2O = a ribonucleoside + phosphate. Its function is as follows. Nucleotidase that shows phosphatase activity on nucleoside 5'-monophosphates. This chain is 5'-nucleotidase SurE, found in Syntrophotalea carbinolica (strain DSM 2380 / NBRC 103641 / GraBd1) (Pelobacter carbinolicus).